The sequence spans 107 residues: UPF0145 protein TT_C0892 (107 aa).

It belongs to the UPF0145 family.

The protein is UPF0145 protein TT_C0892 of Thermus thermophilus (strain ATCC BAA-163 / DSM 7039 / HB27).